The primary structure comprises 132 residues: Small ribosomal subunit protein uS8 (132 aa).

The protein belongs to the universal ribosomal protein uS8 family. As to quaternary structure, part of the 30S ribosomal subunit. Contacts proteins S5 and S12.

Functionally, one of the primary rRNA binding proteins, it binds directly to 16S rRNA central domain where it helps coordinate assembly of the platform of the 30S subunit. This is Small ribosomal subunit protein uS8 from Ureaplasma urealyticum serovar 10 (strain ATCC 33699 / Western).